Reading from the N-terminus, the 528-residue chain is 4-nitrophenol 4-monooxygenase/4-nitrocatechol 2-monooxygenase, oxygenase component (528 aa).

100–104 (RPPAG) contributes to the substrate binding site. FAD is bound by residues 153 to 155 (PMF), 159 to 162 (QFDR), and threonine 194. 205 to 206 (GN) is a binding site for substrate. Residue 461–464 (TMQR) participates in FAD binding.

Belongs to the FADH(2)-utilizing monooxygenase family. The 4-NP/4-NCA monooxygenase is composed of an oxygenase component NpcA and a reductase component NpcB. It depends on FAD as a cofactor.

The catalysed reaction is 4-nitrophenol + NADH + O2 + H(+) = 4-nitrocatechol + NAD(+) + H2O. The enzyme catalyses 4-nitrocatechol + NADPH + O2 = 2-hydroxy-1,4-benzoquinone + nitrite + NADP(+) + H2O. It carries out the reaction 4-nitrocatechol + NADH + O2 = 2-hydroxy-1,4-benzoquinone + nitrite + NAD(+) + H2O. Its pathway is aromatic compound metabolism. It functions in the pathway xenobiotic degradation. With respect to regulation, inhibited by methimazole. Involved in the degradation of para-nitrophenol (4-NP). Catalyzes both the initial hydroxylation of 4-NP to produce 4-nitrocatechol (4-NCA) and the subsequent oxidative release of the nitro group from 4-NCA to produce 2-hydroxy-1,4-benzoquinone. It can also use 4-nitroresorcinol as substrate with a rate of nitrite release similar to that observed with the two physiological substrates, 4-PN and 4-NCA. The chain is 4-nitrophenol 4-monooxygenase/4-nitrocatechol 2-monooxygenase, oxygenase component (npcA) from Rhodococcus opacus (Nocardia opaca).